Consider the following 305-residue polypeptide: Cyclin-dependent kinase 3 (305 aa).

Positions 4–286 (FQKVEKIGEG…AKTALAHPYF (283 aa)) constitute a Protein kinase domain. Residues 10–18 (IGEGTYGVV) and Lys-33 contribute to the ATP site. Asp-127 functions as the Proton acceptor in the catalytic mechanism.

Belongs to the protein kinase superfamily. CMGC Ser/Thr protein kinase family. CDC2/CDKX subfamily. As to quaternary structure, interacts with CABLES1 and CABLES2. Interacts with ATF1. Binding to CCNC/cyclin-C promotes RB1 phosphorylation. As to expression, expressed in cancer cell lines and glioblastoma tissue.

It carries out the reaction L-seryl-[protein] + ATP = O-phospho-L-seryl-[protein] + ADP + H(+). The enzyme catalyses L-threonyl-[protein] + ATP = O-phospho-L-threonyl-[protein] + ADP + H(+). Its function is as follows. Serine/threonine-protein kinase that plays a critical role in the control of the eukaryotic cell cycle; involved in G0-G1 and G1-S cell cycle transitions. Interacts with CCNC/cyclin-C during interphase. Phosphorylates histone H1, ATF1, RB1 and CABLES1. ATF1 phosphorylation triggers ATF1 transactivation and transcriptional activities, and promotes cell proliferation and transformation. CDK3/cyclin-C mediated RB1 phosphorylation is required for G0-G1 transition. Promotes G1-S transition probably by contributing to the activation of E2F1, E2F2 and E2F3 in a RB1-independent manner. The polypeptide is Cyclin-dependent kinase 3 (CDK3) (Homo sapiens (Human)).